The primary structure comprises 252 residues: Imidazole glycerol phosphate synthase subunit HisF (252 aa).

Active-site residues include aspartate 11 and aspartate 130.

Belongs to the HisA/HisF family. As to quaternary structure, heterodimer of HisH and HisF.

The protein resides in the cytoplasm. It carries out the reaction 5-[(5-phospho-1-deoxy-D-ribulos-1-ylimino)methylamino]-1-(5-phospho-beta-D-ribosyl)imidazole-4-carboxamide + L-glutamine = D-erythro-1-(imidazol-4-yl)glycerol 3-phosphate + 5-amino-1-(5-phospho-beta-D-ribosyl)imidazole-4-carboxamide + L-glutamate + H(+). It participates in amino-acid biosynthesis; L-histidine biosynthesis; L-histidine from 5-phospho-alpha-D-ribose 1-diphosphate: step 5/9. IGPS catalyzes the conversion of PRFAR and glutamine to IGP, AICAR and glutamate. The HisF subunit catalyzes the cyclization activity that produces IGP and AICAR from PRFAR using the ammonia provided by the HisH subunit. In Polynucleobacter necessarius subsp. necessarius (strain STIR1), this protein is Imidazole glycerol phosphate synthase subunit HisF.